We begin with the raw amino-acid sequence, 430 residues long: L-cysteine:1D-myo-inositol 2-amino-2-deoxy-alpha-D-glucopyranoside ligase (430 aa).

Position 48 (Cys48) interacts with Zn(2+). L-cysteinyl-5'-AMP-binding positions include Cys48–Thr51, Thr63, and Asn86–Thr88. A 'HIGH' region motif is present at residues Ile50–His60. Residues Glu192–Pro197 carry the 'ERGGDP' region motif. Trp232 is an L-cysteinyl-5'-AMP binding site. Residue Cys236 coordinates Zn(2+). Gly254–Asp256 contacts L-cysteinyl-5'-AMP. His261 serves as a coordination point for Zn(2+). Ile288 contacts L-cysteinyl-5'-AMP. The short motif at Lys294 to Ser298 is the 'KMSKS' region element.

This sequence belongs to the class-I aminoacyl-tRNA synthetase family. MshC subfamily. In terms of assembly, monomer. The cofactor is Zn(2+).

It catalyses the reaction 1D-myo-inositol 2-amino-2-deoxy-alpha-D-glucopyranoside + L-cysteine + ATP = 1D-myo-inositol 2-(L-cysteinylamino)-2-deoxy-alpha-D-glucopyranoside + AMP + diphosphate + H(+). Catalyzes the ATP-dependent condensation of GlcN-Ins and L-cysteine to form L-Cys-GlcN-Ins. The chain is L-cysteine:1D-myo-inositol 2-amino-2-deoxy-alpha-D-glucopyranoside ligase (mshC) from Corynebacterium efficiens (strain DSM 44549 / YS-314 / AJ 12310 / JCM 11189 / NBRC 100395).